The sequence spans 298 residues: Protease HtpX homolog (298 aa).

The next 2 membrane-spanning stretches (helical) occupy residues 14-34 (VVLL…AGYL) and 39-59 (YAMG…SMIF). Position 143 (H143) interacts with Zn(2+). E144 is an active-site residue. H147 provides a ligand contact to Zn(2+). The next 2 membrane-spanning stretches (helical) occupy residues 158–178 (IAVA…RMLW) and 197–217 (IITL…ASLI). Zn(2+) is bound at residue E226.

The protein belongs to the peptidase M48B family. Zn(2+) serves as cofactor.

Its subcellular location is the cell membrane. The sequence is that of Protease HtpX homolog from Streptococcus pyogenes serotype M28 (strain MGAS6180).